Here is a 152-residue protein sequence, read N- to C-terminus: CASP-like protein 5C3 (152 aa).

The Cytoplasmic portion of the chain corresponds to 1 to 17; the sequence is MVEVPGSVGTTASLSLR. The chain crosses the membrane as a helical span at residues 18–38; that stretch reads LGQMVLAFGSLLFMTIGVRFY. Topologically, residues 39 to 42 are extracellular; sequence QFTA. The chain crosses the membrane as a helical span at residues 43–63; the sequence is FCYLVTIMSLAIPWNLTLAMV. Residues 64-78 lie on the Cytoplasmic side of the membrane; it reads DIYCVILQQPFQKPR. A helical membrane pass occupies residues 79–99; that stretch reads ILLAISIGDWVVSVLALASAS. The Extracellular segment spans residues 100-128; that stretch reads SAASVVDILRSNESSCPPTICNRYQFAAT. N-linked (GlcNAc...) asparagine glycosylation occurs at N111. A helical membrane pass occupies residues 129-149; that stretch reads LAFLTWFLSLSSSLFNLWLLP. Residues 150-152 are Cytoplasmic-facing; the sequence is SLI.

This sequence belongs to the Casparian strip membrane proteins (CASP) family. In terms of assembly, homodimer and heterodimers. In terms of tissue distribution, expressed in the floral organ abscission zone and flower buds.

The protein resides in the cell membrane. This Arabidopsis thaliana (Mouse-ear cress) protein is CASP-like protein 5C3.